A 311-amino-acid chain; its full sequence is Acetyl-coenzyme A carboxylase carboxyl transferase subunit alpha (311 aa).

The 251-residue stretch at 36–286 (ELKKEVERVY…VNYFLKSLEE (251 aa)) folds into the CoA carboxyltransferase C-terminal domain.

The protein belongs to the AccA family. As to quaternary structure, acetyl-CoA carboxylase is a heterohexamer composed of biotin carboxyl carrier protein (AccB), biotin carboxylase (AccC) and two subunits each of ACCase subunit alpha (AccA) and ACCase subunit beta (AccD).

It is found in the cytoplasm. It carries out the reaction N(6)-carboxybiotinyl-L-lysyl-[protein] + acetyl-CoA = N(6)-biotinyl-L-lysyl-[protein] + malonyl-CoA. Its pathway is lipid metabolism; malonyl-CoA biosynthesis; malonyl-CoA from acetyl-CoA: step 1/1. Component of the acetyl coenzyme A carboxylase (ACC) complex. First, biotin carboxylase catalyzes the carboxylation of biotin on its carrier protein (BCCP) and then the CO(2) group is transferred by the carboxyltransferase to acetyl-CoA to form malonyl-CoA. This chain is Acetyl-coenzyme A carboxylase carboxyl transferase subunit alpha, found in Wolinella succinogenes (strain ATCC 29543 / DSM 1740 / CCUG 13145 / JCM 31913 / LMG 7466 / NCTC 11488 / FDC 602W) (Vibrio succinogenes).